We begin with the raw amino-acid sequence, 576 residues long: Sulfite reductase [NADPH] hemoprotein beta-component (576 aa).

[4Fe-4S] cluster is bound by residues cysteine 435, cysteine 441, cysteine 480, and cysteine 484. Cysteine 484 contacts siroheme.

Belongs to the nitrite and sulfite reductase 4Fe-4S domain family. In terms of assembly, alpha(8)-beta(8). The alpha component is a flavoprotein, the beta component is a hemoprotein. It depends on siroheme as a cofactor. Requires [4Fe-4S] cluster as cofactor.

The catalysed reaction is hydrogen sulfide + 3 NADP(+) + 3 H2O = sulfite + 3 NADPH + 4 H(+). It participates in sulfur metabolism; hydrogen sulfide biosynthesis; hydrogen sulfide from sulfite (NADPH route): step 1/1. In terms of biological role, component of the sulfite reductase complex that catalyzes the 6-electron reduction of sulfite to sulfide. This is one of several activities required for the biosynthesis of L-cysteine from sulfate. The sequence is that of Sulfite reductase [NADPH] hemoprotein beta-component from Photorhabdus laumondii subsp. laumondii (strain DSM 15139 / CIP 105565 / TT01) (Photorhabdus luminescens subsp. laumondii).